The primary structure comprises 346 residues: Histidinol-phosphate aminotransferase (346 aa).

K209 carries the post-translational modification N6-(pyridoxal phosphate)lysine.

The protein belongs to the class-II pyridoxal-phosphate-dependent aminotransferase family. Histidinol-phosphate aminotransferase subfamily. Homodimer. It depends on pyridoxal 5'-phosphate as a cofactor.

The enzyme catalyses L-histidinol phosphate + 2-oxoglutarate = 3-(imidazol-4-yl)-2-oxopropyl phosphate + L-glutamate. It participates in amino-acid biosynthesis; L-histidine biosynthesis; L-histidine from 5-phospho-alpha-D-ribose 1-diphosphate: step 7/9. This Vibrio campbellii (strain ATCC BAA-1116) protein is Histidinol-phosphate aminotransferase.